The primary structure comprises 264 residues: Ribosomal protein L11 methyltransferase (264 aa).

Residues T116, G137, D159, and N200 each contribute to the S-adenosyl-L-methionine site.

The protein belongs to the methyltransferase superfamily. PrmA family.

The protein resides in the cytoplasm. The catalysed reaction is L-lysyl-[protein] + 3 S-adenosyl-L-methionine = N(6),N(6),N(6)-trimethyl-L-lysyl-[protein] + 3 S-adenosyl-L-homocysteine + 3 H(+). Methylates ribosomal protein L11. The chain is Ribosomal protein L11 methyltransferase from Thermotoga neapolitana.